The sequence spans 506 residues: Histidine ammonia-lyase (506 aa).

A cross-link (5-imidazolinone (Ala-Gly)) is located at residues Ala143–Gly145. Ser144 is modified (2,3-didehydroalanine (Ser)).

Belongs to the PAL/histidase family. Post-translationally, contains an active site 4-methylidene-imidazol-5-one (MIO), which is formed autocatalytically by cyclization and dehydration of residues Ala-Ser-Gly.

Its subcellular location is the cytoplasm. The catalysed reaction is L-histidine = trans-urocanate + NH4(+). The protein operates within amino-acid degradation; L-histidine degradation into L-glutamate; N-formimidoyl-L-glutamate from L-histidine: step 1/3. The sequence is that of Histidine ammonia-lyase from Salmonella dublin (strain CT_02021853).